Consider the following 184-residue polypeptide: Large ribosomal subunit protein uL6 (184 aa).

Belongs to the universal ribosomal protein uL6 family. As to quaternary structure, part of the 50S ribosomal subunit.

In terms of biological role, this protein binds to the 23S rRNA, and is important in its secondary structure. It is located near the subunit interface in the base of the L7/L12 stalk, and near the tRNA binding site of the peptidyltransferase center. The protein is Large ribosomal subunit protein uL6 of Thermosipho africanus (strain TCF52B).